The following is a 217-amino-acid chain: RING-H2 finger protein ATL70 (217 aa).

Residues 61 to 81 (IGGFRYGIGVSIGVLLLITTI) form a helical membrane-spanning segment. The segment at 147 to 189 (CAICLGDYKGKHLLRQLPDCNHLFHLKCIDTWLRLNPTCPVCR) adopts an RING-type; atypical zinc-finger fold.

This sequence belongs to the RING-type zinc finger family. ATL subfamily.

It localises to the membrane. It carries out the reaction S-ubiquitinyl-[E2 ubiquitin-conjugating enzyme]-L-cysteine + [acceptor protein]-L-lysine = [E2 ubiquitin-conjugating enzyme]-L-cysteine + N(6)-ubiquitinyl-[acceptor protein]-L-lysine.. Its pathway is protein modification; protein ubiquitination. The chain is RING-H2 finger protein ATL70 (ATL70) from Arabidopsis thaliana (Mouse-ear cress).